Consider the following 210-residue polypeptide: Pyridoxine/pyridoxamine 5'-phosphate oxidase (210 aa).

Substrate contacts are provided by residues 7–10 (RDEY) and Lys-65. FMN is bound by residues 60-65 (RMVLLK), 75-76 (FT), Arg-81, Lys-82, and Gln-104. Substrate is bound by residues Tyr-122, Arg-126, and Ser-130. Residues 139 to 140 (QS) and Trp-183 each bind FMN. 189 to 191 (RLH) is a substrate binding site. FMN is bound at residue Arg-193.

Belongs to the pyridoxamine 5'-phosphate oxidase family. As to quaternary structure, homodimer. FMN is required as a cofactor.

The catalysed reaction is pyridoxamine 5'-phosphate + O2 + H2O = pyridoxal 5'-phosphate + H2O2 + NH4(+). The enzyme catalyses pyridoxine 5'-phosphate + O2 = pyridoxal 5'-phosphate + H2O2. The protein operates within cofactor metabolism; pyridoxal 5'-phosphate salvage; pyridoxal 5'-phosphate from pyridoxamine 5'-phosphate: step 1/1. It functions in the pathway cofactor metabolism; pyridoxal 5'-phosphate salvage; pyridoxal 5'-phosphate from pyridoxine 5'-phosphate: step 1/1. Its function is as follows. Catalyzes the oxidation of either pyridoxine 5'-phosphate (PNP) or pyridoxamine 5'-phosphate (PMP) into pyridoxal 5'-phosphate (PLP). This is Pyridoxine/pyridoxamine 5'-phosphate oxidase from Haemophilus influenzae (strain ATCC 51907 / DSM 11121 / KW20 / Rd).